The primary structure comprises 710 residues: Effector protein AvrPphD (710 aa).

Residues Met-1–Pro-15 are compositionally biased toward polar residues. Disordered regions lie at residues Met-1 to Arg-36, Ile-136 to Ser-155, and Ser-173 to Ser-207.

It is found in the secreted. Functionally, effector protein involved in non-host recognition and able to elicit hypersensitive response (HR). This is Effector protein AvrPphD (avrPphD) from Pseudomonas savastanoi pv. phaseolicola (Pseudomonas syringae pv. phaseolicola).